The chain runs to 382 residues: MSALKRMMRVSNRSLIAFIFFFSLSTSCLYFIYVAPGIANTYLFMVQARGIMLRENVKTIGHMIRLYTNKNTTLNGTDYPEGNNTSDYLVQTTTYLPQNFTYLPHLPCPEKLPYMRGFLSVNVSEISFDEVHQLFSKDSEIGPGGHWRPKDCKPRWKVAVLIPFRNRHEHLPIFFLHLIPMLQKQRLEFAFYVIEQTGTQPFNRAMLFNVGFKEAMKDRAWDCVIFHDVDHLPENDRNYYGCGEMPRHFAAKLDKYMYILPYKEFFGGVSGLTVEQFRKINGFPNAFWGWGGEDDDLWNRVHYAGYNVTRPEGDLGKYISIPHHHRGEVQFLGRYKLLRYSKERQYIDGLNNLLYTPKILVDRLYTNISVNLMPELAPIEDY.

The Cytoplasmic portion of the chain corresponds to 1–15; it reads MSALKRMMRVSNRSL. Residues 16–35 form a helical; Signal-anchor for type II membrane protein membrane-spanning segment; sequence IAFIFFFSLSTSCLYFIYVA. Residues 36 to 382 are Lumenal-facing; sequence PGIANTYLFM…MPELAPIEDY (347 aa). N-linked (GlcNAc...) asparagine glycans are attached at residues Asn-71, Asn-75, Asn-83, Asn-84, Asn-99, and Asn-122. An intrachain disulfide couples Cys-108 to Cys-152. Residues 163 to 167, 202 to 204, 229 to 230, Tyr-258, and Trp-290 contribute to the UDP-alpha-D-galactose site; these read PFRNR, FNR, and VD. A disulfide bridge connects residues Cys-223 and Cys-242. Asp-230 is a Mn(2+) binding site. Residue 292–295 coordinates N-acetyl-D-glucosamine; sequence GEDD. Asn-307 carries an N-linked (GlcNAc...) asparagine glycan. His-323 lines the Mn(2+) pocket. 323–324 lines the UDP-alpha-D-galactose pocket; it reads HH. Arg-334 serves as a coordination point for N-acetyl-D-glucosamine. Asn-367 carries an N-linked (GlcNAc...) asparagine glycan.

The protein belongs to the glycosyltransferase 7 family. The cofactor is Mn(2+). It depends on Mg(2+) as a cofactor. Ca(2+) is required as a cofactor. Brain and kidney.

It localises to the golgi apparatus. Its subcellular location is the golgi stack membrane. It carries out the reaction a beta-D-glucosyl-(1&lt;-&gt;1')-N-acylsphing-4-enine + UDP-alpha-D-galactose = a beta-D-Gal-(1-&gt;4)-beta-D-Glc-(1&lt;-&gt;1)-Cer(d18:1(4E)) + UDP + H(+). Its pathway is protein modification; protein glycosylation. The protein operates within sphingolipid metabolism. Inhibited by EDTA. Catalyzes the synthesis of lactosylceramide (LacCer) via the transfer of galactose from UDP-galactose to glucosylceramide (GlcCer). LacCer is the starting point in the biosynthesis of all gangliosides (membrane-bound glycosphingolipids) which play pivotal roles in the CNS including neuronal maturation and axonal and myelin formation. The polypeptide is Beta-1,4-galactosyltransferase 6 (Mus musculus (Mouse)).